Reading from the N-terminus, the 211-residue chain is Protein-L-isoaspartate O-methyltransferase (211 aa).

Serine 60 is a catalytic residue.

Belongs to the methyltransferase superfamily. L-isoaspartyl/D-aspartyl protein methyltransferase family.

The protein resides in the cytoplasm. The catalysed reaction is [protein]-L-isoaspartate + S-adenosyl-L-methionine = [protein]-L-isoaspartate alpha-methyl ester + S-adenosyl-L-homocysteine. Its function is as follows. Catalyzes the methyl esterification of L-isoaspartyl residues in peptides and proteins that result from spontaneous decomposition of normal L-aspartyl and L-asparaginyl residues. It plays a role in the repair and/or degradation of damaged proteins. The polypeptide is Protein-L-isoaspartate O-methyltransferase (Pseudomonas savastanoi pv. phaseolicola (strain 1448A / Race 6) (Pseudomonas syringae pv. phaseolicola (strain 1448A / Race 6))).